The primary structure comprises 196 residues: Nucleoid occlusion factor SlmA (196 aa).

The region spanning 7–68 (TNRREEILQA…GLIEFIEDSI (62 aa)) is the HTH tetR-type domain. Positions 31–50 (TTAKLAAQVGVSEAALYRHF) form a DNA-binding region, H-T-H motif. The stretch at 115 to 142 (EQDRLQSRINQLFERIETQLRQVLRERK) forms a coiled coil.

Belongs to the nucleoid occlusion factor SlmA family. In terms of assembly, homodimer. Interacts with FtsZ.

It localises to the cytoplasm. Its subcellular location is the nucleoid. In terms of biological role, required for nucleoid occlusion (NO) phenomenon, which prevents Z-ring formation and cell division over the nucleoid. Acts as a DNA-associated cell division inhibitor that binds simultaneously chromosomal DNA and FtsZ, and disrupts the assembly of FtsZ polymers. SlmA-DNA-binding sequences (SBS) are dispersed on non-Ter regions of the chromosome, preventing FtsZ polymerization at these regions. The polypeptide is Nucleoid occlusion factor SlmA (Photobacterium profundum (strain SS9)).